A 373-amino-acid polypeptide reads, in one-letter code: Probable cysteine protease RD19C (373 aa).

The signal sequence occupies residues 1–20 (MDRVVFFFLIAATLLAGSLG). Positions 21–139 (STVISGEVTD…QTAPILPTSD (119 aa)) are cleaved as a propeptide — activation peptide. 2 disulfides stabilise this stretch: Cys-161–Cys-211 and Cys-195–Cys-245. Cys-164 is a catalytic residue. The N-linked (GlcNAc...) asparagine glycan is linked to Asn-258. Cys-301 and Cys-356 form a disulfide bridge. Residues His-307 and Asn-334 contribute to the active site.

This sequence belongs to the peptidase C1 family.

The protein localises to the lytic vacuole. Probable thiol protease. This Arabidopsis thaliana (Mouse-ear cress) protein is Probable cysteine protease RD19C.